The primary structure comprises 790 residues: LMBR1 domain-containing protein 2 homolog B (790 aa).

A compositionally biased stretch (low complexity) spans 1 to 21 (MSSNTTTPTPTSTPTPTSSPS). Residues 1 to 22 (MSSNTTTPTPTSTPTPTSSPSI) form a disordered region. The next 5 helical transmembrane spans lie at 34–54 (FGNLLFFAISLVLCGVVVLIG), 66–86 (IYATFFSFLGWFMCFSIAYLV), 128–148 (FLYFGSLILCWVIFPVLQSFS), 167–187 (VILYTFMFIAGLIGIIVILSV), and 195–215 (FLSFVMLLANVYGVILITITM). Residues 236–266 (LRNYRVEAVVLKTELEDVKRQLIDHLKLIKT) adopt a coiled-coil conformation. 3 helical membrane-spanning segments follow: residues 401 to 421 (FIIAGLVCVCLSGIILWSEIV), 442 to 462 (PGIGLQIFCFIPMIYMCVCSY), and 539 to 559 (FTLFFPIFMIVVCVISFFNLH). Disordered stretches follow at residues 630 to 665 (SQLDGASGAHREPSIDSSNRYKPTPTKTSINIPKLS), 701 to 751 (LGEK…TKDK), and 765 to 790 (SFQDDDDHTFDDIEMGAYGTGRKNKK). Positions 644–665 (IDSSNRYKPTPTKTSINIPKLS) are enriched in polar residues. Positions 706-734 (NASNNNNNNNNNNNNNNSNNKNSNNNNNS) are enriched in low complexity. The span at 735–746 (ILTSNYESYSTP) shows a compositional bias: polar residues. Residues 766–778 (FQDDDDHTFDDIE) are compositionally biased toward acidic residues.

The protein belongs to the LIMR family.

The protein localises to the membrane. This is LMBR1 domain-containing protein 2 homolog B from Dictyostelium discoideum (Social amoeba).